A 561-amino-acid polypeptide reads, in one-letter code: Dihydroxy-acid dehydratase (561 aa).

Residue C50 participates in [2Fe-2S] cluster binding. D82 contributes to the Mg(2+) binding site. Residue C123 participates in [2Fe-2S] cluster binding. Mg(2+) is bound by residues D124 and K125. At K125 the chain carries N6-carboxylysine. Residue C195 coordinates [2Fe-2S] cluster. E447 provides a ligand contact to Mg(2+). The active-site Proton acceptor is the S473.

It belongs to the IlvD/Edd family. Homodimer. [2Fe-2S] cluster is required as a cofactor. The cofactor is Mg(2+).

The enzyme catalyses (2R)-2,3-dihydroxy-3-methylbutanoate = 3-methyl-2-oxobutanoate + H2O. It carries out the reaction (2R,3R)-2,3-dihydroxy-3-methylpentanoate = (S)-3-methyl-2-oxopentanoate + H2O. The protein operates within amino-acid biosynthesis; L-isoleucine biosynthesis; L-isoleucine from 2-oxobutanoate: step 3/4. It participates in amino-acid biosynthesis; L-valine biosynthesis; L-valine from pyruvate: step 3/4. In terms of biological role, functions in the biosynthesis of branched-chain amino acids. Catalyzes the dehydration of (2R,3R)-2,3-dihydroxy-3-methylpentanoate (2,3-dihydroxy-3-methylvalerate) into 2-oxo-3-methylpentanoate (2-oxo-3-methylvalerate) and of (2R)-2,3-dihydroxy-3-methylbutanoate (2,3-dihydroxyisovalerate) into 2-oxo-3-methylbutanoate (2-oxoisovalerate), the penultimate precursor to L-isoleucine and L-valine, respectively. This is Dihydroxy-acid dehydratase from Crocosphaera subtropica (strain ATCC 51142 / BH68) (Cyanothece sp. (strain ATCC 51142)).